The following is a 394-amino-acid chain: Elongation factor Tu (394 aa).

In terms of domain architecture, tr-type G spans 10-204 (KPHVNVGTIG…ALDSYIPEPE (195 aa)). The G1 stretch occupies residues 19–26 (GHVDHGKT). 19 to 26 (GHVDHGKT) contacts GTP. Residue Thr26 participates in Mg(2+) binding. Residues 60–64 (GITIN) form a G2 region. A G3 region spans residues 81 to 84 (DCPG). GTP-binding positions include 81–85 (DCPGH) and 136–139 (NKCD). The interval 136 to 139 (NKCD) is G4. The segment at 174 to 176 (SAL) is G5.

Belongs to the TRAFAC class translation factor GTPase superfamily. Classic translation factor GTPase family. EF-Tu/EF-1A subfamily. As to quaternary structure, monomer.

Its subcellular location is the cytoplasm. The enzyme catalyses GTP + H2O = GDP + phosphate + H(+). Its function is as follows. GTP hydrolase that promotes the GTP-dependent binding of aminoacyl-tRNA to the A-site of ribosomes during protein biosynthesis. In Shewanella sp. (strain ANA-3), this protein is Elongation factor Tu.